The primary structure comprises 64 residues: Large ribosomal subunit protein bL35 (64 aa).

This sequence belongs to the bacterial ribosomal protein bL35 family.

The sequence is that of Large ribosomal subunit protein bL35 from Ureaplasma parvum serovar 3 (strain ATCC 27815 / 27 / NCTC 11736).